A 474-amino-acid polypeptide reads, in one-letter code: Variant surface glycoprotein MITAT 1.5 (474 aa).

The signal sequence occupies residues 1–22; it reads MIHSNKVATVVLALISSWPADG. 2 disulfides stabilise this stretch: cysteine 37-cysteine 161 and cysteine 144-cysteine 214. Residues asparagine 74 and asparagine 95 are each glycosylated (N-linked (GlcNAc...) asparagine). An N-linked (GlcNAc...) asparagine glycan is attached at asparagine 329. The segment at 388–449 is disordered; sequence AKDGEGQKNQ…ETDEPDKEKC (62 aa). Basic and acidic residues-rich tracts occupy residues 414 to 423 and 435 to 449; these read TNKEACEKEN and KGKDGETDEPDKEKC. The GPI-anchor amidated asparagine moiety is linked to residue asparagine 451. Residues 452 to 474 constitute a propeptide, removed in mature form; that stretch reads GSFLTSKQFAFSVVSAAFMALLF.

The protein localises to the cell membrane. VSG forms a coat on the surface of the parasite. The trypanosome evades the immune response of the host by expressing a series of antigenically distinct VSGs from an estimated 1000 VSG genes. The chain is Variant surface glycoprotein MITAT 1.5 from Trypanosoma brucei brucei.